Reading from the N-terminus, the 159-residue chain is MIHYLKSFFLYEIVRGMALTLKYFFKPKVTINYPYEKSPISPRFKGEHALRRYENGEERCIACKLCEAICPAQAIVIEADEREDGSRRTTRYDIDMTKCIYCGLCQEACPVDAIVEGPNFEFASLTHTALIYDKERLLQNGDRWEQALASKLRKDYEYR.

2 consecutive 4Fe-4S ferredoxin-type domains span residues 51–80 and 90–119; these read RRYE…IEAD and TRYD…EGPN. Cysteine 60, cysteine 63, cysteine 66, cysteine 70, cysteine 99, cysteine 102, cysteine 105, and cysteine 109 together coordinate [4Fe-4S] cluster.

It belongs to the complex I 23 kDa subunit family. NDH-1 is composed of 14 different subunits. Subunits NuoA, H, J, K, L, M, N constitute the membrane sector of the complex. It depends on [4Fe-4S] cluster as a cofactor.

It localises to the cell membrane. It catalyses the reaction a quinone + NADH + 5 H(+)(in) = a quinol + NAD(+) + 4 H(+)(out). Functionally, NDH-1 shuttles electrons from NADH, via FMN and iron-sulfur (Fe-S) centers, to quinones in the respiratory chain. The immediate electron acceptor for the enzyme in this species is believed to be ubiquinone. Couples the redox reaction to proton translocation (for every two electrons transferred, four hydrogen ions are translocated across the cytoplasmic membrane), and thus conserves the redox energy in a proton gradient. This is NADH-quinone oxidoreductase subunit I from Rickettsia africae (strain ESF-5).